The primary structure comprises 441 residues: Transcriptional regulatory protein ZraR (441 aa).

A Response regulatory domain is found at 7 to 121 (DILVVDDDVS…RLQETLEKAL (115 aa)). Residue Asp-56 is modified to 4-aspartylphosphate. The region spanning 141–370 (MIGSSPAMQH…LENAIERAVV (230 aa)) is the Sigma-54 factor interaction domain. ATP is bound by residues Gly-172, Thr-173, Arg-329, and Arg-359. The segment at residues 421 to 440 (KTEAARQLGITRKTLLAKLS) is a DNA-binding region (H-T-H motif).

As to quaternary structure, forms homohexamers in the crystal structure. However, the dimerization interface between DNA-binding domains observed in the crystal structure suggests that dodecamers, rather than hexamers, might be the functionally important oligomer. Post-translationally, phosphorylated by ZraS.

The protein resides in the cytoplasm. Activity of the ZraS/ZraR two-component system is repressed by the zinc-bound form of ZraP, which probably interacts with the periplasmic region of ZraS. Part of the Zra signaling pathway, an envelope stress response (ESR) system composed of the periplasmic accessory protein ZraP, the histidine kinase ZraS and the transcriptional regulator ZraR. The ZraPSR system contributes to antibiotic resistance and is important for membrane integrity in the presence of membrane-targeting biocides. ZraR is a member of the two-component regulatory system ZraS/ZraR. When activated by ZraS, acts in conjunction with sigma-54 to regulate the expression of zraP in the presence of high Zn(2+) or Pb(2+) concentrations. Also positively autoregulates the expression of the zraSR operon. This Salmonella typhimurium (strain LT2 / SGSC1412 / ATCC 700720) protein is Transcriptional regulatory protein ZraR.